We begin with the raw amino-acid sequence, 644 residues long: MFQDNPLLAQLKQQLHSQTPRAEGVVKATEKGFGFLEVDAQKSYFIPPPQMKKVMHGDRIIAVIHSEKERESAEPEELVEPFLTRFVGKVQGKNDRLTIVPDHPLLKDAIPCRAARGLNHEFKEGDWAVAEMRRHPLKGDRSFYAELTQYITFGDDHFVPWWVTLARHNLEKEAPDGVATEMLDEGLVREDLTSLDFVTIDSASTEDMDDALFAKALPDDKLQLIVAIADPTAWIAEGSKLDKAAKIRAFTNYLPGFNIPMLPRELSDDLCSLRANEVRPVLACRMTLSADGTIEDNIEFFAATIESKAKLVYDQVSDWLENTGDWKPESEAIAEQVRLLAQICQRRGEWRHNHALVFKDRPDYRFILGEKGEVLDIVAEPRRIANRIVEEAMIAANICAARVLRDKLGFGIYNVHMGFDPANADALAALLKTHGLHVDAEEVLTLDGFCKLRRELDAQPTGFLDSRIRRFQSFAEISSEPGPHFGLGLEAYATWTSPIRKYGDMINHRLLKAVIKGETATRPQDEITVQMAERRRLNRMAERDVGDWLYARFLKDKAGTGTRFAAEIVDISRGGMRVRLVDNGAIAFIPAPFLHAVRDELVCSQENGTVQIKGETVYKVTDVIDVTIAEVRMETRSIIARPVA.

An RNB domain is found at 189-516; sequence REDLTSLDFV…NHRLLKAVIK (328 aa). In terms of domain architecture, S1 motif spans 561–643; the sequence is GTRFAAEIVD…ETRSIIARPV (83 aa).

Belongs to the RNR ribonuclease family. RNase II subfamily.

It localises to the cytoplasm. The catalysed reaction is Exonucleolytic cleavage in the 3'- to 5'-direction to yield nucleoside 5'-phosphates.. Its function is as follows. Involved in mRNA degradation. Hydrolyzes single-stranded polyribonucleotides processively in the 3' to 5' direction. The chain is Exoribonuclease 2 from Shigella flexneri.